Reading from the N-terminus, the 88-residue chain is RNA-binding protein Hfq (88 aa).

One can recognise a Sm domain in the interval 9 to 68; it reads DPYLNVLRKERVPVSIYLVNGIKLQGQVESFDQFVVLLKNTVSQMVYKHAISTVVPSRAV.

This sequence belongs to the Hfq family. As to quaternary structure, homohexamer.

Functionally, RNA chaperone that binds small regulatory RNA (sRNAs) and mRNAs to facilitate mRNA translational regulation in response to envelope stress, environmental stress and changes in metabolite concentrations. Also binds with high specificity to tRNAs. This Cellvibrio japonicus (strain Ueda107) (Pseudomonas fluorescens subsp. cellulosa) protein is RNA-binding protein Hfq.